The sequence spans 748 residues: Catalase-peroxidase (748 aa).

The tryptophyl-tyrosyl-methioninium (Trp-Tyr) (with M-262) cross-link spans 91–236 (WHSAGTYRVG…LAAVQMGLIY (146 aa)). The active-site Proton acceptor is the His92. Residues 201 to 223 (AQPVADKAGHGKEHGRTDGGRNL) form a disordered region. Over residues 207–221 (KAGHGKEHGRTDGGR) the composition is skewed to basic and acidic residues. Residues 236 to 262 (YVNPEGPDGNPDPQASAHDIRETFARM) constitute a cross-link (tryptophyl-tyrosyl-methioninium (Tyr-Met) (with W-91)). A heme b-binding site is contributed by His277.

This sequence belongs to the peroxidase family. Peroxidase/catalase subfamily. In terms of assembly, homodimer or homotetramer. Heme b serves as cofactor. Post-translationally, formation of the three residue Trp-Tyr-Met cross-link is important for the catalase, but not the peroxidase activity of the enzyme.

It carries out the reaction H2O2 + AH2 = A + 2 H2O. It catalyses the reaction 2 H2O2 = O2 + 2 H2O. Its function is as follows. Bifunctional enzyme with both catalase and broad-spectrum peroxidase activity. This is Catalase-peroxidase from Bordetella avium (strain 197N).